The following is a 339-amino-acid chain: RNA polymerase II holoenzyme cyclin-like subunit (339 aa).

A disordered region spans residues 48–67; it reads PNSADSSNGNAANNGGGNGR. The segment covering 49–60 has biased composition (low complexity); it reads NSADSSNGNAAN. The Cyclin N-terminal domain maps to 93 to 194; sequence RIYCYFLIMK…LIEELQCYLI (102 aa).

Belongs to the cyclin family. Cyclin C subfamily. Component of the SRB8-11 complex, a regulatory module of the Mediator complex.

Its subcellular location is the nucleus. Its function is as follows. Component of the SRB8-11 complex. The SRB8-11 complex is a regulatory module of the Mediator complex which is itself involved in regulation of basal and activated RNA polymerase II-dependent transcription. The SRB8-11 complex may be involved in the transcriptional repression of a subset of genes regulated by Mediator. It may inhibit the association of the Mediator complex with RNA polymerase II to form the holoenzyme complex. The SRB8-11 complex phosphorylates the C-terminal domain (CTD) of the largest subunit of RNA polymerase II. The protein is RNA polymerase II holoenzyme cyclin-like subunit (SSN8) of Candida glabrata (strain ATCC 2001 / BCRC 20586 / JCM 3761 / NBRC 0622 / NRRL Y-65 / CBS 138) (Yeast).